A 281-amino-acid chain; its full sequence is Pantothenate synthetase (281 aa).

Residue methionine 30–histidine 37 coordinates ATP. Histidine 37 serves as the catalytic Proton donor. Position 61 (glutamine 61) interacts with (R)-pantoate. Glutamine 61 is a beta-alanine binding site. ATP is bound at residue glycine 147 to aspartate 150. Residue glutamine 153 coordinates (R)-pantoate. Residues isoleucine 176 and leucine 184 to arginine 187 each bind ATP.

Belongs to the pantothenate synthetase family. As to quaternary structure, homodimer.

The protein localises to the cytoplasm. The enzyme catalyses (R)-pantoate + beta-alanine + ATP = (R)-pantothenate + AMP + diphosphate + H(+). The protein operates within cofactor biosynthesis; (R)-pantothenate biosynthesis; (R)-pantothenate from (R)-pantoate and beta-alanine: step 1/1. Its function is as follows. Catalyzes the condensation of pantoate with beta-alanine in an ATP-dependent reaction via a pantoyl-adenylate intermediate. The polypeptide is Pantothenate synthetase (Porphyromonas gingivalis (strain ATCC 33277 / DSM 20709 / CIP 103683 / JCM 12257 / NCTC 11834 / 2561)).